The chain runs to 295 residues: Threonine/homoserine exporter RhtA (295 aa).

At 1–9 the chain is on the cytoplasmic side; the sequence is MPGSLRKMP. Residues 10–30 traverse the membrane as a helical segment; sequence VWLPIVILLVAMASIQGGASL. Residues 30-135 form the EamA 1 domain; it reads LAKSLFPLVG…VLAVLGLWFL (106 aa). The Periplasmic segment spans residues 31–38; the sequence is AKSLFPLV. A helical membrane pass occupies residues 39–59; sequence GAPGVTALRLALGTLILIAFF. Topologically, residues 60–71 are cytoplasmic; the sequence is KPWRLRFAKEQR. A helical membrane pass occupies residues 72 to 92; the sequence is LPLLFYGVSLGGMNYLFYLSI. Position 93 (Q93) is a topological domain, periplasmic. A helical transmembrane segment spans residues 94–114; sequence TVPLGIAVALEFTGPLAVALF. Topologically, residues 115–118 are cytoplasmic; the sequence is SSRR. A helical membrane pass occupies residues 119–139; that stretch reads PVDFVWVVLAVLGLWFLLPLG. At 140–146 the chain is on the periplasmic side; it reads QDVSHVD. Residues 147-167 form a helical membrane-spanning segment; sequence LTGCALALGAGACWAIYILSG. An EamA 2 domain is found at 159 to 278; sequence CWAIYILSGQ…LGAIIAASMG (120 aa). At 168–175 the chain is on the cytoplasmic side; it reads QRAGAEHG. Residues 176-196 traverse the membrane as a helical segment; the sequence is PATVAIGSLIAALIFVPIGAL. Residues 197 to 200 lie on the Periplasmic side of the membrane; the sequence is QAGE. A helical membrane pass occupies residues 201–221; sequence ALWHWSVIPLGLAVAILSTAL. The Cytoplasmic segment spans residues 222–237; the sequence is PYSLEMIALTRLPTRT. Residues 238–258 form a helical membrane-spanning segment; it reads FGTLMSMEPALAAVSGMIFLG. The Periplasmic portion of the chain corresponds to 259–262; it reads ETLT. Residues 263–283 form a helical membrane-spanning segment; that stretch reads PIQLLALGAIIAASMGSTLTV. Topologically, residues 284 to 295 are cytoplasmic; that stretch reads RKESKIKELDIN.

Belongs to the drug/metabolite transporter (DMT) superfamily. 10 TMS drug/metabolite exporter (DME) (TC 2.A.7.3) family.

It is found in the cell inner membrane. Involved in the efflux of threonine and homoserine. The protein is Threonine/homoserine exporter RhtA (rhtA) of Escherichia coli O157:H7.